A 685-amino-acid chain; its full sequence is E3 ubiquitin-protein ligase RNF103 (685 aa).

4 helical membrane-spanning segments follow: residues 6-26 (FFLLLYFLVLFVLARFFEAIV), 326-346 (LFVLSLVLVNLMAWMDLFITQ), 366-386 (LLIISWLPVLGFLQLPYLDSF), and 411-431 (MFYSSHPALFLSTYLGHGLLI). A compositionally biased stretch (acidic residues) spans 526 to 543 (EEMSEGSQDTENDSESEN). The tract at residues 526–550 (EEMSEGSQDTENDSESENTDTLSSE) is disordered. The RING-type zinc finger occupies 621–663 (CVVCLENFENGCLLMGLPCGHVFHQNCIVMWLAGGRHCCPVCR).

As to quaternary structure, interacts with DERL1 and VCP. In terms of tissue distribution, highly expressed in the normal cerebellum but not in the cerebral cortex.

It localises to the endoplasmic reticulum membrane. The enzyme catalyses S-ubiquitinyl-[E2 ubiquitin-conjugating enzyme]-L-cysteine + [acceptor protein]-L-lysine = [E2 ubiquitin-conjugating enzyme]-L-cysteine + N(6)-ubiquitinyl-[acceptor protein]-L-lysine.. The protein operates within protein modification; protein ubiquitination. Acts as an E2-dependent E3 ubiquitin-protein ligase, probably involved in the ER-associated protein degradation pathway. This chain is E3 ubiquitin-protein ligase RNF103 (RNF103), found in Homo sapiens (Human).